Here is a 319-residue protein sequence, read N- to C-terminus: Succinoglycan biosynthesis protein ExoW (319 aa).

This sequence belongs to the glycosyltransferase 2 family.

It localises to the cell membrane. Its pathway is glycan metabolism; exopolysaccharide biosynthesis. Glycosyltransferase required for the synthesis of succinoglycan (EPS I). Needed for the addition of the seventh sugar (glucose), catalyzes the formation of a beta-1,3 linkage between the seventh and eighth sugar. The sequence is that of Succinoglycan biosynthesis protein ExoW (exoW) from Rhizobium meliloti (strain 1021) (Ensifer meliloti).